The chain runs to 130 residues: Protein ApaG (130 aa).

An ApaG domain is found at 3–127; that stretch reads KAETRGISVT…FSLDSPHVRR (125 aa).

The polypeptide is Protein ApaG (Methylobacterium radiotolerans (strain ATCC 27329 / DSM 1819 / JCM 2831 / NBRC 15690 / NCIMB 10815 / 0-1)).